The primary structure comprises 115 residues: NADH-ubiquinone oxidoreductase chain 3 (115 aa).

3 helical membrane-spanning segments follow: residues 4 to 24 (LTAL…AFWL), 55 to 75 (FFLV…LLPL), and 83 to 103 (YINI…LGLA).

It belongs to the complex I subunit 3 family. In terms of assembly, core subunit of respiratory chain NADH dehydrogenase (Complex I) which is composed of 45 different subunits. Interacts with TMEM186. Interacts with TMEM242.

The protein resides in the mitochondrion inner membrane. It carries out the reaction a ubiquinone + NADH + 5 H(+)(in) = a ubiquinol + NAD(+) + 4 H(+)(out). Functionally, core subunit of the mitochondrial membrane respiratory chain NADH dehydrogenase (Complex I) which catalyzes electron transfer from NADH through the respiratory chain, using ubiquinone as an electron acceptor. Essential for the catalytic activity of complex I. This chain is NADH-ubiquinone oxidoreductase chain 3, found in Peromyscus polionotus (Oldfield mouse).